Here is a 194-residue protein sequence, read N- to C-terminus: Large ribosomal subunit protein bL9 (194 aa).

Over residues Arg156–Gln167 the composition is skewed to basic and acidic residues. Residues Arg156–Gln194 form a disordered region. A compositionally biased stretch (acidic residues) spans Phe181–Gln194.

This sequence belongs to the bacterial ribosomal protein bL9 family.

In terms of biological role, binds to the 23S rRNA. The protein is Large ribosomal subunit protein bL9 of Rhodopseudomonas palustris (strain BisB5).